The following is a 264-amino-acid chain: Apolipoprotein A-I (264 aa).

Residues 1–18 (MKAVVLAVAVLFLTGSQA) form the signal peptide. Tandem repeats lie at residues 67–88 (LNLL…EQLG) and 89–110 (PVTR…QEMN). Residues 67 to 264 (LNLLENWDTF…DEATQKLNTQ (198 aa)) are 10 X approximate tandem repeats. M109 is modified (methionine sulfoxide). Residues 111–121 (KDLEEVKQKVQ) form a 3; half-length repeat. A run of 3 repeats spans residues 122 to 143 (PYLD…PKVE), 144 to 165 (PLGA…KQLV), and 166 to 187 (PLGE…TKLA). One copy of the 7; truncated repeat lies at 188 to 207 (PYSDQMRDRLAERLTALRDN). M193 bears the Methionine sulfoxide mark. Repeat unit 8 spans residues 208–229 (PKLAEYHARATEHLKKLGEKTK). A 9; half-length repeat occupies 230 to 240 (PTLEDLRQGLM). M240 bears the Methionine sulfoxide mark. Copy 10 of the repeat occupies 241–264 (PWLESLKAKALSVLDEATQKLNTQ).

This sequence belongs to the apolipoprotein A1/A4/E family. As to quaternary structure, homodimer. Interacts with APOA1BP and CLU. Component of a sperm activating protein complex (SPAP), consisting of APOA1, an immunoglobulin heavy chain, an immunoglobulin light chain and albumin. Interacts with NDRG1. Interacts with SCGB3A2. Interacts with NAXE and YJEFN3. In terms of processing, glycosylated. Palmitoylated. Post-translationally, phosphorylation sites are present in the extracellular medium.

The protein localises to the secreted. Its function is as follows. Participates in the reverse transport of cholesterol from tissues to the liver for excretion by promoting cholesterol efflux from tissues and by acting as a cofactor for the lecithin cholesterol acyltransferase (LCAT). As part of the SPAP complex, activates spermatozoa motility. In Nannospalax galili (Northern Israeli blind subterranean mole rat), this protein is Apolipoprotein A-I (Apoa1).